A 182-amino-acid chain; its full sequence is Large ribosomal subunit protein uL16 (182 aa).

This sequence belongs to the universal ribosomal protein uL16 family.

This chain is Large ribosomal subunit protein uL16, found in Thermococcus onnurineus (strain NA1).